The following is a 172-amino-acid chain: 3-hydroxydecanoyl-[acyl-carrier-protein] dehydratase (172 aa).

Residue histidine 71 is part of the active site.

Belongs to the thioester dehydratase family. FabA subfamily. Homodimer.

Its subcellular location is the cytoplasm. The catalysed reaction is a (3R)-hydroxyacyl-[ACP] = a (2E)-enoyl-[ACP] + H2O. The enzyme catalyses (3R)-hydroxydecanoyl-[ACP] = (2E)-decenoyl-[ACP] + H2O. It catalyses the reaction (2E)-decenoyl-[ACP] = (3Z)-decenoyl-[ACP]. Its pathway is lipid metabolism; fatty acid biosynthesis. In terms of biological role, necessary for the introduction of cis unsaturation into fatty acids. Catalyzes the dehydration of (3R)-3-hydroxydecanoyl-ACP to E-(2)-decenoyl-ACP and then its isomerization to Z-(3)-decenoyl-ACP. Can catalyze the dehydratase reaction for beta-hydroxyacyl-ACPs with saturated chain lengths up to 16:0, being most active on intermediate chain length. The sequence is that of 3-hydroxydecanoyl-[acyl-carrier-protein] dehydratase from Brucella anthropi (strain ATCC 49188 / DSM 6882 / CCUG 24695 / JCM 21032 / LMG 3331 / NBRC 15819 / NCTC 12168 / Alc 37) (Ochrobactrum anthropi).